An 850-amino-acid polypeptide reads, in one-letter code: Protein argonaute 8 (850 aa).

The tract at residues 1 to 30 is disordered; the sequence is MDTTLPPPQHMEREPLKSKSSLLPMTRRGN. In terms of domain architecture, PAZ spans 247 to 361; sequence PVVDFLIANQ…FPIELCELVS (115 aa). The Piwi domain maps to 518–811; that stretch reads QSILGEVPPK…AAAQMATAMK (294 aa).

This sequence belongs to the argonaute family. Ago subfamily.

In terms of biological role, involved in RNA-mediated post-transcriptional gene silencing (PTGS). Main component of the RNA-induced silencing complex (RISC) that binds to a short guide RNA such as a microRNA (miRNA) or small interfering RNA (siRNA). RISC uses the mature miRNA or siRNA as a guide for slicer-directed cleavage of homologous mRNAs to repress gene expression. This chain is Protein argonaute 8 (AGO8), found in Arabidopsis thaliana (Mouse-ear cress).